Here is a 64-residue protein sequence, read N- to C-terminus: DNA gyrase inhibitor YacG (64 aa).

4 residues coordinate Zn(2+): C10, C13, C29, and C33.

This sequence belongs to the DNA gyrase inhibitor YacG family. Interacts with GyrB. Zn(2+) is required as a cofactor.

Functionally, inhibits all the catalytic activities of DNA gyrase by preventing its interaction with DNA. Acts by binding directly to the C-terminal domain of GyrB, which probably disrupts DNA binding by the gyrase. This Pectobacterium carotovorum subsp. carotovorum (strain PC1) protein is DNA gyrase inhibitor YacG.